The primary structure comprises 84 residues: Large ribosomal subunit protein bL27 (84 aa).

The segment at 1-22 (MAHKKAGGSTRNGRDSESKRLG) is disordered.

It belongs to the bacterial ribosomal protein bL27 family.

This chain is Large ribosomal subunit protein bL27, found in Shewanella sp. (strain MR-4).